The primary structure comprises 209 residues: Large ribosomal subunit protein uL3 (209 aa).

The protein belongs to the universal ribosomal protein uL3 family. In terms of assembly, part of the 50S ribosomal subunit. Forms a cluster with proteins L14 and L19.

One of the primary rRNA binding proteins, it binds directly near the 3'-end of the 23S rRNA, where it nucleates assembly of the 50S subunit. This is Large ribosomal subunit protein uL3 from Nitratidesulfovibrio vulgaris (strain DSM 19637 / Miyazaki F) (Desulfovibrio vulgaris).